The chain runs to 69 residues: Cytochrome c oxidase subunit 8A, mitochondrial (69 aa).

Residues 1 to 25 constitute a mitochondrion transit peptide; sequence MSVLTPLLLRGLAGSARRLPVPRAQ. An SIFI-degron motif is present at residues 2–19; the sequence is SVLTPLLLRGLAGSARRL. Topologically, residues 26-36 are mitochondrial matrix; sequence IHSKPPREQLG. Residues 37 to 60 form a helical membrane-spanning segment; it reads TMDVAIGITSCFLCFLLPAGWVLS. The Mitochondrial intermembrane segment spans residues 61 to 69; it reads HLESYKKRE.

Belongs to the cytochrome c oxidase VIII family. In terms of assembly, component of the cytochrome c oxidase (complex IV, CIV), a multisubunit enzyme composed of 14 subunits. The complex is composed of a catalytic core of 3 subunits MT-CO1, MT-CO2 and MT-CO3, encoded in the mitochondrial DNA, and 11 supernumerary subunits COX4I, COX5A, COX5B, COX6A, COX6B, COX6C, COX7A, COX7B, COX7C, COX8 and NDUFA4, which are encoded in the nuclear genome. The complex exists as a monomer or a dimer and forms supercomplexes (SCs) in the inner mitochondrial membrane with NADH-ubiquinone oxidoreductase (complex I, CI) and ubiquinol-cytochrome c oxidoreductase (cytochrome b-c1 complex, complex III, CIII), resulting in different assemblies (supercomplex SCI(1)III(2)IV(1) and megacomplex MCI(2)III(2)IV(2)). In response to mitochondrial stress, the precursor protein is ubiquitinated by the SIFI complex in the cytoplasm before mitochondrial import, leading to its degradation. Within the SIFI complex, UBR4 initiates ubiquitin chain that are further elongated or branched by KCMF1.

Its subcellular location is the mitochondrion inner membrane. Its pathway is energy metabolism; oxidative phosphorylation. In terms of biological role, component of the cytochrome c oxidase, the last enzyme in the mitochondrial electron transport chain which drives oxidative phosphorylation. The respiratory chain contains 3 multisubunit complexes succinate dehydrogenase (complex II, CII), ubiquinol-cytochrome c oxidoreductase (cytochrome b-c1 complex, complex III, CIII) and cytochrome c oxidase (complex IV, CIV), that cooperate to transfer electrons derived from NADH and succinate to molecular oxygen, creating an electrochemical gradient over the inner membrane that drives transmembrane transport and the ATP synthase. Cytochrome c oxidase is the component of the respiratory chain that catalyzes the reduction of oxygen to water. Electrons originating from reduced cytochrome c in the intermembrane space (IMS) are transferred via the dinuclear copper A center (CU(A)) of subunit 2 and heme A of subunit 1 to the active site in subunit 1, a binuclear center (BNC) formed by heme A3 and copper B (CU(B)). The BNC reduces molecular oxygen to 2 water molecules using 4 electrons from cytochrome c in the IMS and 4 protons from the mitochondrial matrix. The chain is Cytochrome c oxidase subunit 8A, mitochondrial (COX8A) from Carlito syrichta (Philippine tarsier).